A 446-amino-acid polypeptide reads, in one-letter code: GRAM domain-containing protein 2B (446 aa).

Met-1 is modified (N-acetylmethionine). Residues 1 to 120 form a disordered region; sequence MVKKRLPSND…RKKSSSSSQY (120 aa). Positions 29–43 are enriched in low complexity; it reads SRSSTDSPSSVFFSS. A compositionally biased stretch (basic and acidic residues) spans 95 to 113; that stretch reads DKNDCKTESKNDPKTERKK. In terms of domain architecture, GRAM spans 124-191; the sequence is MHFHKLFLSV…FSVTLIKKTK (68 aa). The segment covering 234–247 has biased composition (polar residues); it reads TSVGNSPNPSSAEN. Residues 234–253 are disordered; it reads TSVGNSPNPSSAENSFRADR. A phosphoserine mark is found at Ser-239, Ser-256, and Ser-266. Positions 276-298 are disordered; that stretch reads RQDMEGYSSSGSQTPESENSRDF. The span at 282–292 shows a compositional bias: polar residues; it reads YSSSGSQTPES.

The sequence is that of GRAM domain-containing protein 2B (GRAMD2B) from Pongo abelii (Sumatran orangutan).